Reading from the N-terminus, the 365-residue chain is Chorismate synthase (365 aa).

Residues R48 and R54 each contribute to the NADP(+) site. FMN is bound by residues 125 to 127 (RSS), 238 to 239 (NA), G278, 293 to 297 (KPTSS), and R319.

This sequence belongs to the chorismate synthase family. Homotetramer. The cofactor is FMNH2.

The catalysed reaction is 5-O-(1-carboxyvinyl)-3-phosphoshikimate = chorismate + phosphate. It participates in metabolic intermediate biosynthesis; chorismate biosynthesis; chorismate from D-erythrose 4-phosphate and phosphoenolpyruvate: step 7/7. Its function is as follows. Catalyzes the anti-1,4-elimination of the C-3 phosphate and the C-6 proR hydrogen from 5-enolpyruvylshikimate-3-phosphate (EPSP) to yield chorismate, which is the branch point compound that serves as the starting substrate for the three terminal pathways of aromatic amino acid biosynthesis. This reaction introduces a second double bond into the aromatic ring system. This is Chorismate synthase from Vesicomyosocius okutanii subsp. Calyptogena okutanii (strain HA).